A 146-amino-acid polypeptide reads, in one-letter code: Hemoglobin subunit beta-C (146 aa).

The Globin domain occupies 2–146; the sequence is EWTDFERATI…VVSSLGRQYH (145 aa). Residues H63 and H92 each coordinate heme b.

The protein belongs to the globin family. As to quaternary structure, hbC is a heterotetramer of two alpha chains and two beta-C chains. Red blood cells.

Functionally, involved in oxygen transport from gills to the various peripheral tissues. The polypeptide is Hemoglobin subunit beta-C (hbbc) (Trematomus bernacchii (Emerald rockcod)).